The chain runs to 115 residues: OV39 antigen (115 aa).

In Onchocerca volvulus, this protein is OV39 antigen (OV39).